Consider the following 113-residue polypeptide: Large ribosomal subunit protein eL31 (113 aa).

It belongs to the eukaryotic ribosomal protein eL31 family.

The polypeptide is Large ribosomal subunit protein eL31 (RPL31) (Candida glabrata (strain ATCC 2001 / BCRC 20586 / JCM 3761 / NBRC 0622 / NRRL Y-65 / CBS 138) (Yeast)).